We begin with the raw amino-acid sequence, 369 residues long: Histone deacetylase-like amidohydrolase (369 aa).

Catalysis depends on histidine 143, which acts as the Proton donor/acceptor. Zn(2+) is bound by residues aspartate 180, histidine 182, and aspartate 268.

Belongs to the histone deacetylase family. Homotetramer; dimer of dimers. It depends on Zn(2+) as a cofactor.

Zinc, and cobalt and nickel at a lesser extent, are able to increase the catalytic activity (2.2-, 1.3- and 1.1-fold respectively) at concentrations of 1 mM. Higher concentrations have an inhibitory effect. Magnesium, manganese and calcium have no effect on activity at concentrations between 0 and 10 mM. At 100 mM, the catalytic activity is increased between 1.2- and 2.1-fold. Hydroxamates like TSA and SAHA inhibit the enzyme. Is also inhibited by azobenzenes, stilbenes and arylazopyrazoles. Functionally, exhibits significant levels of protein deacetylase activity comparable to those of eukaryotic HDACs in assays both with fluorogenic peptidic substrates and acetate-radiolabeled histones. Accepts proteins with epsilon-acetylated lysine residues and tritiated-acetate-prelabeled chicken histones as substrates. The natural substrate protein is not yet known. This Alcaligenes sp. (strain DSM 11172) (Bordetella sp. (strain FB188)) protein is Histone deacetylase-like amidohydrolase (hdaH).